The following is a 113-amino-acid chain: Large ribosomal subunit protein uL22 (113 aa).

Belongs to the universal ribosomal protein uL22 family. Part of the 50S ribosomal subunit.

In terms of biological role, this protein binds specifically to 23S rRNA; its binding is stimulated by other ribosomal proteins, e.g. L4, L17, and L20. It is important during the early stages of 50S assembly. It makes multiple contacts with different domains of the 23S rRNA in the assembled 50S subunit and ribosome. Functionally, the globular domain of the protein is located near the polypeptide exit tunnel on the outside of the subunit, while an extended beta-hairpin is found that lines the wall of the exit tunnel in the center of the 70S ribosome. This Magnetococcus marinus (strain ATCC BAA-1437 / JCM 17883 / MC-1) protein is Large ribosomal subunit protein uL22.